The sequence spans 287 residues: rRNA adenine N-6-methyltransferase (287 aa).

Positions Met1–Leu13 are enriched in basic residues. The tract at residues Met1–Phe21 is disordered. S-adenosyl-L-methionine-binding residues include His25, Met27, Gly52, Glu73, Asp98, and Asn114.

This sequence belongs to the class I-like SAM-binding methyltransferase superfamily. rRNA adenine N(6)-methyltransferase family. Homodimer.

Its function is as follows. Involved in erythromycin resistance. This Bacillus anthracis protein is rRNA adenine N-6-methyltransferase (ermJ).